The chain runs to 283 residues: ATP phosphoribosyltransferase (283 aa).

The protein belongs to the ATP phosphoribosyltransferase family. Long subfamily. As to quaternary structure, equilibrium between an active dimeric form, an inactive hexameric form and higher aggregates. Interconversion between the various forms is largely reversible and is influenced by the natural substrates and inhibitors of the enzyme. The cofactor is Mg(2+).

The protein resides in the cytoplasm. The enzyme catalyses 1-(5-phospho-beta-D-ribosyl)-ATP + diphosphate = 5-phospho-alpha-D-ribose 1-diphosphate + ATP. It functions in the pathway amino-acid biosynthesis; L-histidine biosynthesis; L-histidine from 5-phospho-alpha-D-ribose 1-diphosphate: step 1/9. Its activity is regulated as follows. Feedback inhibited by histidine. Functionally, catalyzes the condensation of ATP and 5-phosphoribose 1-diphosphate to form N'-(5'-phosphoribosyl)-ATP (PR-ATP). Has a crucial role in the pathway because the rate of histidine biosynthesis seems to be controlled primarily by regulation of HisG enzymatic activity. The protein is ATP phosphoribosyltransferase of Mycobacterium sp. (strain KMS).